The primary structure comprises 82 residues: ATP synthase subunit c, chloroplastic (82 aa).

2 helical membrane-spanning segments follow: residues 3–23 and 57–77; these read PLIC…GAIG and LAFM…LMFA.

This sequence belongs to the ATPase C chain family. As to quaternary structure, F-type ATPases have 2 components, F(1) - the catalytic core - and F(0) - the membrane proton channel. F(1) has five subunits: alpha(3), beta(3), gamma(1), delta(1), epsilon(1). F(0) has four main subunits: a(1), b(1), b'(1) and c(10-14). The alpha and beta chains form an alternating ring which encloses part of the gamma chain. F(1) is attached to F(0) by a central stalk formed by the gamma and epsilon chains, while a peripheral stalk is formed by the delta, b and b' chains.

The protein localises to the plastid. It is found in the chloroplast thylakoid membrane. F(1)F(0) ATP synthase produces ATP from ADP in the presence of a proton or sodium gradient. F-type ATPases consist of two structural domains, F(1) containing the extramembraneous catalytic core and F(0) containing the membrane proton channel, linked together by a central stalk and a peripheral stalk. During catalysis, ATP synthesis in the catalytic domain of F(1) is coupled via a rotary mechanism of the central stalk subunits to proton translocation. Functionally, key component of the F(0) channel; it plays a direct role in translocation across the membrane. A homomeric c-ring of between 10-14 subunits forms the central stalk rotor element with the F(1) delta and epsilon subunits. The protein is ATP synthase subunit c, chloroplastic of Ostreococcus tauri.